A 310-amino-acid chain; its full sequence is D-alanine--D-alanine ligase (310 aa).

In terms of domain architecture, ATP-grasp spans 105 to 301; the sequence is KQAFVSAGIL…FEELVERIIL (197 aa). ATP is bound at residue 133–186; the sequence is SFGLPLVVKPVQEGSSVGISIVKEESQLAAAVKLAFRHDDEILVEQFIKGQEVQ. Residues Asp-254, Glu-267, and Asn-269 each contribute to the Mg(2+) site.

This sequence belongs to the D-alanine--D-alanine ligase family. Mg(2+) serves as cofactor. The cofactor is Mn(2+).

It is found in the cytoplasm. It carries out the reaction 2 D-alanine + ATP = D-alanyl-D-alanine + ADP + phosphate + H(+). Its pathway is cell wall biogenesis; peptidoglycan biosynthesis. Its function is as follows. Cell wall formation. The chain is D-alanine--D-alanine ligase from Pelobacter propionicus (strain DSM 2379 / NBRC 103807 / OttBd1).